Here is a 510-residue protein sequence, read N- to C-terminus: Maturase K (510 aa).

The protein belongs to the intron maturase 2 family. MatK subfamily.

It localises to the plastid. The protein resides in the chloroplast. Usually encoded in the trnK tRNA gene intron. Probably assists in splicing its own and other chloroplast group II introns. The chain is Maturase K from Mammillaria haageana (Cactus).